Here is a 278-residue protein sequence, read N- to C-terminus: Probable NADP-dependent mannitol dehydrogenase (278 aa).

Positions 45, 117, and 152 each coordinate NADP(+). Active-site proton donor residues include S171 and Y186. NADP(+) contacts are provided by Y186, K190, and T220. Residue K190 is the Lowers pKa of active site Tyr of the active site.

The protein belongs to the short-chain dehydrogenases/reductases (SDR) family. In terms of assembly, homotetramer.

The enzyme catalyses D-mannitol + NADP(+) = D-fructose + NADPH + H(+). Functionally, versatile oxidoreductase that catalyzes the oxidation and reduction of polar as well as non-polar substrates at a very broad pH range. Preferentially oxidizes secondary alcohols. Has highest activity for racemic 2-heptanol and racemic octanol. Is also an efficient reductase for selected substrates. Substrate selectivity was found for medium chain length ketones with the carbonyl function at position C-2. Has highest activities for ribulose and fructose. The enzyme is (R)-selective in the reduction direction and produces exclusively the (R)-enantiomer. The protein is Probable NADP-dependent mannitol dehydrogenase of Yarrowia lipolytica (strain CLIB 122 / E 150) (Yeast).